Consider the following 551-residue polypeptide: Cleavage and polyadenylation specificity factor subunit 6 (551 aa).

Residues 1–213 (MADGVDHIDI…RGRFPGAVPG (213 aa)) are necessary for interaction with NXF1. The 81-residue stretch at 81–161 (IALYIGNLTW…QNPVVTPCNK (81 aa)) folds into the RRM domain. The segment at 81 to 161 (IALYIGNLTW…QNPVVTPCNK (81 aa)) is necessary for interaction with NUDT21/CPSF5. Positions 81–161 (IALYIGNLTW…QNPVVTPCNK (81 aa)) are necessary for nuclear paraspeckles localization. Residue Thr-157 is modified to Phosphothreonine. A compositionally biased stretch (polar residues) spans 169–180 (MQSRKTTQSGQM). 2 disordered regions span residues 169-411 (MQSR…PLSE) and 477-551 (LHGI…YRHR). The GAR signature appears at 202-206 (RGRGR). The segment covering 207 to 219 (FPGAVPGGDRFPG) has biased composition (low complexity). 3 stretches are compositionally biased toward pro residues: residues 220–265 (PAGP…PLAG), 285–366 (GQPP…PPPT), and 377–388 (GPPPTDPYGRPP). Positions 358–551 (NPAFFPPPTN…RDREREYRHR (194 aa)) are (Microbial infection) Binds to HIV-1 capsid protein p24 (CA). The span at 389–404 (PYDRGDYGPPGREMDT) shows a compositional bias: basic and acidic residues. Thr-404 and Thr-407 each carry phosphothreonine. The segment at 404 to 551 (TARTPLSEAE…RDREREYRHR (148 aa)) is sufficient for nuclear speckle localization. The necessary for RNA-binding stretch occupies residues 405-551 (ARTPLSEAEF…RDREREYRHR (147 aa)). The interval 481–551 (ESKSYGSGSR…RDREREYRHR (71 aa)) is necessary for interaction with SRSF3, SRSF7 and TRA2B/SFRS10. Positions 489-503 (SRRERSRERDHSRSR) are enriched in basic and acidic residues. Residues 490-551 (RRERSRERDH…RDREREYRHR (62 aa)) form an arg/Ser-rich domain region. Ser-494, Ser-500, Ser-511, Ser-513, and Ser-525 each carry phosphoserine. The segment covering 504-514 (EKSRRHKSRSR) has biased composition (basic residues). The sufficient for nuclear targeting stretch occupies residues 510-551 (KSRSRDRHDDYYRERSRERERHRDRDRDRDRERDREREYRHR). The span at 515–551 (DRHDDYYRERSRERERHRDRDRDRDRERDREREYRHR) shows a compositional bias: basic and acidic residues.

This sequence belongs to the RRM CPSF6/7 family. Component of the cleavage factor Im (CFIm) complex which is a heterotetramer composed of two subunits of NUDT21/CPSF5 and two subunits of CPSF6 or CPSF7 or a heterodimer of CPSF6 and CPSF7. The cleavage factor Im (CFIm) complex associates with the CPSF and CSTF complexes to promote the assembly of the core mRNA 3'-processing machinery. Associates with the exon junction complex (EJC). Associates with the 80S ribosome particle. Interacts (via the RRM domain) with NUDT21/CPSF5; this interaction is direct and enhances binding to RNA. Interacts (via Arg/Ser-rich domain) with FIP1L1 (preferentially via unphosphorylated form and Arg/Glu/Asp-rich domain); this interaction mediates, at least in part, the interaction between the CFIm and CPSF complexes and may be inhibited by CPSF6 hyper-phosphorylation. Interacts (via N-terminus) with NXF1; this interaction is direct. Interacts with SRSF3. Interacts with SRSF7. Interacts with SNRNP70. Interacts with TRA2B/SFRS10. Interacts with UPF1. Interacts with UPF3B. Interacts with VIRMA. Interacts (via Arg/Ser-rich domain) with TNPO3; promoting nuclear import of CPSF6 independently of its phosphorylation status. Interacts with YTHDC1. As to quaternary structure, (Microbial infection) Interacts (via C-terminus) with HIV-1 capsid protein p24 (CA). Phosphorylated. Phosphorylated in the Arg/Ser-rich domain by SRPK1, in vitro. In terms of processing, symmetrically dimethylated on arginine residues in the GAR motif by PRMT5 in a WDR77- and CLNS1A-dependent manner. Asymmetrically dimethylated on arginine residues in the GAR motif by PRMT1.

It localises to the nucleus. Its subcellular location is the nucleoplasm. The protein resides in the nucleus speckle. It is found in the cytoplasm. Component of the cleavage factor Im (CFIm) complex that functions as an activator of the pre-mRNA 3'-end cleavage and polyadenylation processing required for the maturation of pre-mRNA into functional mRNAs. CFIm contributes to the recruitment of multiprotein complexes on specific sequences on the pre-mRNA 3'-end, so called cleavage and polyadenylation signals (pA signals). Most pre-mRNAs contain multiple pA signals, resulting in alternative cleavage and polyadenylation (APA) producing mRNAs with variable 3'-end formation. The CFIm complex acts as a key regulator of cleavage and polyadenylation site choice during APA through its binding to 5'-UGUA-3' elements localized in the 3'-untranslated region (UTR) for a huge number of pre-mRNAs. CPSF6 enhances NUDT21/CPSF5 binding to 5'-UGUA-3' elements localized upstream of pA signals and promotes RNA looping, and hence activates directly the mRNA 3'-processing machinery. Plays a role in mRNA export. In terms of biological role, (Microbial infection) Binds HIV-1 capsid-nucleocapsid (HIV-1 CA-NC) complexes and might thereby promote the integration of the virus in the nucleus of dividing cells (in vitro). The sequence is that of Cleavage and polyadenylation specificity factor subunit 6 from Homo sapiens (Human).